The following is a 56-amino-acid chain: Large ribosomal subunit protein bL33c (56 aa).

This sequence belongs to the bacterial ribosomal protein bL33 family.

The protein resides in the plastid. The protein localises to the chloroplast. This chain is Large ribosomal subunit protein bL33c (rpl33), found in Guillardia theta (Cryptophyte).